We begin with the raw amino-acid sequence, 129 residues long: Glycine cleavage system H protein (129 aa).

A Lipoyl-binding domain is found at 24-106 (IAVIGITAYA…YGDGWLIKVR (83 aa)). Residue lysine 65 is modified to N6-lipoyllysine.

The protein belongs to the GcvH family. As to quaternary structure, the glycine cleavage system is composed of four proteins: P, T, L and H. The cofactor is (R)-lipoate.

The glycine cleavage system catalyzes the degradation of glycine. The H protein shuttles the methylamine group of glycine from the P protein to the T protein. The protein is Glycine cleavage system H protein of Synechococcus sp. (strain JA-2-3B'a(2-13)) (Cyanobacteria bacterium Yellowstone B-Prime).